Reading from the N-terminus, the 67-residue chain is Large ribosomal subunit protein bL35 (67 aa).

Belongs to the bacterial ribosomal protein bL35 family.

This chain is Large ribosomal subunit protein bL35, found in Leptospira interrogans serogroup Icterohaemorrhagiae serovar Lai (strain 56601).